The primary structure comprises 288 residues: 4-diphosphocytidyl-2-C-methyl-D-erythritol kinase (288 aa).

The active site involves K11. 100 to 110 (PIAAGLGSGSS) contributes to the ATP binding site. D140 is a catalytic residue.

This sequence belongs to the GHMP kinase family. IspE subfamily.

The catalysed reaction is 4-CDP-2-C-methyl-D-erythritol + ATP = 4-CDP-2-C-methyl-D-erythritol 2-phosphate + ADP + H(+). It participates in isoprenoid biosynthesis; isopentenyl diphosphate biosynthesis via DXP pathway; isopentenyl diphosphate from 1-deoxy-D-xylulose 5-phosphate: step 3/6. Its function is as follows. Catalyzes the phosphorylation of the position 2 hydroxy group of 4-diphosphocytidyl-2C-methyl-D-erythritol. In Wolbachia pipientis wMel, this protein is 4-diphosphocytidyl-2-C-methyl-D-erythritol kinase.